The sequence spans 30 residues: Brevinin-2Rj (30 aa).

Cys-24 and Cys-30 are disulfide-bonded.

Expressed by the skin glands.

Its subcellular location is the secreted. Functionally, antimicrobial peptide. The chain is Brevinin-2Rj from Pelophylax ridibundus (Marsh frog).